Here is a 578-residue protein sequence, read N- to C-terminus: Peptidyl-prolyl cis-trans isomerase-like 2 (578 aa).

The U-box domain maps to 40-114; that stretch reads RRLPFNFCAA…SDSLGAGLSD (75 aa). Residues 240-260 are disordered; sequence KAREQGGDVNRSSTALTKPTG. Residues 321–475 form the PPIase cyclophilin-type domain; it reads ATGFARMETN…NKILIKDIVI (155 aa). The segment at 505–578 is disordered; sequence GTDDDKTTWT…GGGFGNFDNW (74 aa). Over residues 538–548 the composition is skewed to polar residues; that stretch reads KTTTQQSTPTV. Residues 551-560 show a composition bias toward acidic residues; it reads ADLEDVDTWE. A compositionally biased stretch (gly residues) spans 569–578; it reads GGGFGNFDNW.

This sequence belongs to the cyclophilin-type PPIase family. PPIL2 subfamily.

The protein resides in the nucleus. It catalyses the reaction [protein]-peptidylproline (omega=180) = [protein]-peptidylproline (omega=0). It carries out the reaction S-ubiquitinyl-[E2 ubiquitin-conjugating enzyme]-L-cysteine + [acceptor protein]-L-lysine = [E2 ubiquitin-conjugating enzyme]-L-cysteine + N(6)-ubiquitinyl-[acceptor protein]-L-lysine.. Its pathway is protein modification; protein ubiquitination. Its function is as follows. May catalyze the cis-trans isomerization of proline imidic peptide bonds in oligopeptides thereby assisting the folding of proteins. May also function as a chaperone, playing a role in intracellular transport of proteins. May also have a protein ubiquitin ligase activity acting as an E3 ubiquitin protein ligase or as a ubiquitin-ubiquitin ligase promoting elongation of ubiquitin chains on proteins. The chain is Peptidyl-prolyl cis-trans isomerase-like 2 (CYP8) from Gibberella zeae (strain ATCC MYA-4620 / CBS 123657 / FGSC 9075 / NRRL 31084 / PH-1) (Wheat head blight fungus).